Reading from the N-terminus, the 202-residue chain is Peptidyl-tRNA hydrolase (202 aa).

Position 14 (Y14) interacts with tRNA. The Proton acceptor role is filled by H19. 3 residues coordinate tRNA: Y64, N66, and N112.

The protein belongs to the PTH family. As to quaternary structure, monomer.

It is found in the cytoplasm. It catalyses the reaction an N-acyl-L-alpha-aminoacyl-tRNA + H2O = an N-acyl-L-amino acid + a tRNA + H(+). In terms of biological role, hydrolyzes ribosome-free peptidyl-tRNAs (with 1 or more amino acids incorporated), which drop off the ribosome during protein synthesis, or as a result of ribosome stalling. Its function is as follows. Catalyzes the release of premature peptidyl moieties from peptidyl-tRNA molecules trapped in stalled 50S ribosomal subunits, and thus maintains levels of free tRNAs and 50S ribosomes. In Nitrobacter winogradskyi (strain ATCC 25391 / DSM 10237 / CIP 104748 / NCIMB 11846 / Nb-255), this protein is Peptidyl-tRNA hydrolase.